A 424-amino-acid polypeptide reads, in one-letter code: Serine--tRNA ligase (424 aa).

231–233 (TAE) contributes to the L-serine binding site. 262–264 (RSE) contributes to the ATP binding site. Residue E285 coordinates L-serine. 349–352 (EISS) serves as a coordination point for ATP. S385 contacts L-serine.

The protein belongs to the class-II aminoacyl-tRNA synthetase family. Type-1 seryl-tRNA synthetase subfamily. In terms of assembly, homodimer. The tRNA molecule binds across the dimer.

Its subcellular location is the cytoplasm. It carries out the reaction tRNA(Ser) + L-serine + ATP = L-seryl-tRNA(Ser) + AMP + diphosphate + H(+). It catalyses the reaction tRNA(Sec) + L-serine + ATP = L-seryl-tRNA(Sec) + AMP + diphosphate + H(+). It functions in the pathway aminoacyl-tRNA biosynthesis; selenocysteinyl-tRNA(Sec) biosynthesis; L-seryl-tRNA(Sec) from L-serine and tRNA(Sec): step 1/1. Catalyzes the attachment of serine to tRNA(Ser). Is also able to aminoacylate tRNA(Sec) with serine, to form the misacylated tRNA L-seryl-tRNA(Sec), which will be further converted into selenocysteinyl-tRNA(Sec). The chain is Serine--tRNA ligase from Bacillus cereus (strain ZK / E33L).